The primary structure comprises 880 residues: Tyrosine-protein kinase receptor TYRO3 (880 aa).

A signal peptide spans 1-30 (MALRRSMGRPGLRPLLLAGLASLLLPGSAA). Ig-like C2-type domains lie at 31-118 (AGLK…TKIS) and 129-210 (PFFT…AIIR). Over 31–419 (AGLKLMGAPV…QGPPHSRTSW (389 aa)) the chain is Extracellular. N-linked (GlcNAc...) asparagine glycosylation is found at asparagine 53, asparagine 75, asparagine 181, asparagine 220, asparagine 230, asparagine 283, asparagine 356, and asparagine 370. 2 disulfide bridges follow: cysteine 54–cysteine 107 and cysteine 150–cysteine 193. Fibronectin type-III domains lie at 217-310 (APFN…TKGL) and 315-406 (APQN…SHDH). Residues 420–440 (VPVVLGVLTALITAAALALIL) form a helical membrane-spanning segment. The Cytoplasmic portion of the chain corresponds to 441–880 (LRKRRKETRF…QQGLLPHSSC (440 aa)). Serine 456 is modified (phosphoserine). One can recognise a Protein kinase domain in the interval 508–785 (FTLGRMLGKG…LENILGHLSV (278 aa)). Residues 514 to 522 (LGKGEFGSV) and lysine 540 contribute to the ATP site. Catalysis depends on aspartate 645, which acts as the Proton acceptor. 4 positions are modified to phosphotyrosine; by autocatalysis: tyrosine 671, tyrosine 675, tyrosine 676, and tyrosine 794. 2 disordered regions span residues 804-827 (AENG…GSGM) and 842-864 (SPGG…LNEN). Phosphoserine is present on residues serine 808 and serine 859. Residues 852 to 864 (QLEQQPESPLNEN) are compositionally biased toward polar residues.

The protein belongs to the protein kinase superfamily. Tyr protein kinase family. AXL/UFO subfamily. Monomer and homodimer. Interacts (via N-terminus) with extracellular ligands TULP1 and GAS6. Interacts with PIK3R1; this interaction increases PI3-kinase activity. Post-translationally, autophosphorylated. As to expression, abundant in the brain and lower levels in other tissues.

It localises to the cell membrane. The catalysed reaction is L-tyrosyl-[protein] + ATP = O-phospho-L-tyrosyl-[protein] + ADP + H(+). Its function is as follows. Receptor tyrosine kinase that transduces signals from the extracellular matrix into the cytoplasm by binding to several ligands including TULP1 or GAS6. Regulates many physiological processes including cell survival, migration and differentiation. Ligand binding at the cell surface induces dimerization and autophosphorylation of TYRO3 on its intracellular domain that provides docking sites for downstream signaling molecules. Following activation by ligand, interacts with PIK3R1 and thereby enhances PI3-kinase activity. Activates the AKT survival pathway, including nuclear translocation of NF-kappa-B and up-regulation of transcription of NF-kappa-B-regulated genes. TYRO3 signaling plays a role in various processes such as neuron protection from excitotoxic injury, platelet aggregation and cytoskeleton reorganization. Also plays an important role in inhibition of Toll-like receptors (TLRs)-mediated innate immune response by activating STAT1, which selectively induces production of suppressors of cytokine signaling SOCS1 and SOCS3. This chain is Tyrosine-protein kinase receptor TYRO3 (Tyro3), found in Rattus norvegicus (Rat).